The chain runs to 493 residues: Glutamyl-tRNA(Gln) amidotransferase subunit A (493 aa).

Catalysis depends on charge relay system residues Lys79 and Ser159. Ser183 acts as the Acyl-ester intermediate in catalysis.

It belongs to the amidase family. GatA subfamily. As to quaternary structure, heterotrimer of A, B and C subunits.

It carries out the reaction L-glutamyl-tRNA(Gln) + L-glutamine + ATP + H2O = L-glutaminyl-tRNA(Gln) + L-glutamate + ADP + phosphate + H(+). Its function is as follows. Allows the formation of correctly charged Gln-tRNA(Gln) through the transamidation of misacylated Glu-tRNA(Gln) in organisms which lack glutaminyl-tRNA synthetase. The reaction takes place in the presence of glutamine and ATP through an activated gamma-phospho-Glu-tRNA(Gln). This is Glutamyl-tRNA(Gln) amidotransferase subunit A from Agrobacterium fabrum (strain C58 / ATCC 33970) (Agrobacterium tumefaciens (strain C58)).